We begin with the raw amino-acid sequence, 299 residues long: Ribosomal RNA small subunit methyltransferase H 1 (299 aa).

Residues 31-33 (GGH), aspartate 50, phenylalanine 76, aspartate 97, and glutamine 104 contribute to the S-adenosyl-L-methionine site.

This sequence belongs to the methyltransferase superfamily. RsmH family.

It is found in the cytoplasm. The catalysed reaction is cytidine(1402) in 16S rRNA + S-adenosyl-L-methionine = N(4)-methylcytidine(1402) in 16S rRNA + S-adenosyl-L-homocysteine + H(+). In terms of biological role, specifically methylates the N4 position of cytidine in position 1402 (C1402) of 16S rRNA. This chain is Ribosomal RNA small subunit methyltransferase H 1, found in Acholeplasma laidlawii (strain PG-8A).